We begin with the raw amino-acid sequence, 280 residues long: MAPGTGRDFHLHLVSDSTGETLITVSRAVTAQYAGVTPIEHVYPLVRSEKQLDRVLAEIEEAPGIVLFTLLEKDVAVRLEARCQEINCPSLSIIGPVMQLFQAYLGADTTGRVGAQHTLNADYFKRIDALNYTMMHDDGQHVESLEEADVVLVGVSRTSKTPTSVYLANRGTRTANVPLVPGIAIPRQLETLKNPLVVSLHAAPERLIQVRQNRLLSIGAGPGNEAYIDRQSVTEEVIHARRLSVKHDWAQLDVTRRSIEETAAAIMKLFADRRRQRRPD.

Residue G154 to T161 participates in ADP binding.

It belongs to the pyruvate, phosphate/water dikinase regulatory protein family. PDRP subfamily.

It catalyses the reaction N(tele)-phospho-L-histidyl/L-threonyl-[pyruvate, phosphate dikinase] + ADP = N(tele)-phospho-L-histidyl/O-phospho-L-threonyl-[pyruvate, phosphate dikinase] + AMP + H(+). The catalysed reaction is N(tele)-phospho-L-histidyl/O-phospho-L-threonyl-[pyruvate, phosphate dikinase] + phosphate + H(+) = N(tele)-phospho-L-histidyl/L-threonyl-[pyruvate, phosphate dikinase] + diphosphate. In terms of biological role, bifunctional serine/threonine kinase and phosphorylase involved in the regulation of the pyruvate, phosphate dikinase (PPDK) by catalyzing its phosphorylation/dephosphorylation. This Nitrobacter winogradskyi (strain ATCC 25391 / DSM 10237 / CIP 104748 / NCIMB 11846 / Nb-255) protein is Putative pyruvate, phosphate dikinase regulatory protein.